The primary structure comprises 322 residues: tRNA U34 carboxymethyltransferase (322 aa).

Residues Lys-91, Trp-105, Lys-110, Gly-129, 179–180 (LE), Met-195, Tyr-199, and Arg-314 each bind carboxy-S-adenosyl-L-methionine.

The protein belongs to the class I-like SAM-binding methyltransferase superfamily. CmoB family. In terms of assembly, homotetramer.

It carries out the reaction carboxy-S-adenosyl-L-methionine + 5-hydroxyuridine(34) in tRNA = 5-carboxymethoxyuridine(34) in tRNA + S-adenosyl-L-homocysteine + H(+). Its function is as follows. Catalyzes carboxymethyl transfer from carboxy-S-adenosyl-L-methionine (Cx-SAM) to 5-hydroxyuridine (ho5U) to form 5-carboxymethoxyuridine (cmo5U) at position 34 in tRNAs. In Pseudomonas paraeruginosa (strain DSM 24068 / PA7) (Pseudomonas aeruginosa (strain PA7)), this protein is tRNA U34 carboxymethyltransferase.